The chain runs to 431 residues: Probable 3-hydroxy-3-methylglutaryl-coenzyme A reductase (431 aa).

Residues glutamate 85 and aspartate 278 each act as charge relay system in the active site. The active-site Proton donor is histidine 375.

Belongs to the HMG-CoA reductase family.

It catalyses the reaction (R)-mevalonate + 2 NAD(+) + CoA = (3S)-3-hydroxy-3-methylglutaryl-CoA + 2 NADH + 2 H(+). Its pathway is metabolic intermediate metabolism; (R)-mevalonate degradation; (S)-3-hydroxy-3-methylglutaryl-CoA from (R)-mevalonate: step 1/1. Converts HMG-CoA to mevalonate. This is Probable 3-hydroxy-3-methylglutaryl-coenzyme A reductase from Borreliella burgdorferi (strain ATCC 35210 / DSM 4680 / CIP 102532 / B31) (Borrelia burgdorferi).